The chain runs to 1028 residues: Ubiquitin conjugation factor E4 A (1028 aa).

A disordered region spans residues 33 to 57; sequence KEQLKQQSDELPASPDDSDNSVSES. Lysine 386 carries the N6-acetyllysine modification. The U-box domain maps to 949 to 1023; the sequence is DACDEFLDPI…QRWLAERKQQ (75 aa).

This sequence belongs to the ubiquitin conjugation factor E4 family. Expressed in liver, heart, brain, kidney and testis.

Its subcellular location is the cytoplasm. It catalyses the reaction S-ubiquitinyl-[E2 ubiquitin-conjugating enzyme]-L-cysteine + [acceptor protein]-L-lysine = [E2 ubiquitin-conjugating enzyme]-L-cysteine + N(6)-ubiquitinyl-[acceptor protein]-L-lysine.. Its pathway is protein modification; protein ubiquitination. Functionally, ubiquitin-protein ligase that probably functions as an E3 ligase in conjunction with specific E1 and E2 ligases. May also function as an E4 ligase mediating the assembly of polyubiquitin chains on substrates ubiquitinated by another E3 ubiquitin ligase. Mediates 'Lys-48'-linked polyubiquitination of substrates. This chain is Ubiquitin conjugation factor E4 A, found in Mus musculus (Mouse).